Here is a 387-residue protein sequence, read N- to C-terminus: SpoIVD-associated factor A (387 aa).

Positions 2 to 47 (KIHIVQKGDSLWKIAEKYGVDVEEVKKLNTQLSNPDLIMPGMKIKV) constitute a LysM domain. Disordered regions lie at residues 49–106 (SEGV…MPNL) and 355–387 (NPNP…EENE). A compositionally biased stretch (basic and acidic residues) spans 70–96 (KQEHPYAKEKPKSVVDVEDTKPKEKKS). The span at 368–377 (PMTNQPSVNQ) shows a compositional bias: polar residues.

The protein localises to the spore cortex. Its function is as follows. Probably involved in the assembly of some coat protein components implicated in both lysozyme resistance and germination. Could be required for the assembly of CotG. Associates with SpoIVD during the early stage of coat assembly. This chain is SpoIVD-associated factor A (safA), found in Bacillus subtilis (strain 168).